A 423-amino-acid chain; its full sequence is Histidine--tRNA ligase (423 aa).

Belongs to the class-II aminoacyl-tRNA synthetase family. Homodimer.

The protein resides in the cytoplasm. The enzyme catalyses tRNA(His) + L-histidine + ATP = L-histidyl-tRNA(His) + AMP + diphosphate + H(+). The polypeptide is Histidine--tRNA ligase (Haemophilus influenzae (strain 86-028NP)).